The primary structure comprises 211 residues: Guanylate kinase (211 aa).

The Guanylate kinase-like domain maps to 7 to 187 (GLLIILSGPS…AADRIIAIIR (181 aa)). 14-21 (GPSGVGKA) contacts ATP.

Belongs to the guanylate kinase family.

It is found in the cytoplasm. It carries out the reaction GMP + ATP = GDP + ADP. Functionally, essential for recycling GMP and indirectly, cGMP. This Aster yellows witches'-broom phytoplasma (strain AYWB) protein is Guanylate kinase.